The chain runs to 399 residues: Mitochondrial glycine transporter (399 aa).

Solcar repeat units lie at residues 35 to 137, 164 to 251, and 266 to 374; these read IPPY…LRSV, LSTT…CKTN, and GNWM…GRSW. 6 helical membrane passes run 41–66, 112–138, 170–195, 226–249, 270–296, and 349–367; these read LAFG…TRLQ, GTAP…RSVA, LLTG…ARFE, GFTA…EACK, VVSA…KTRM, and GLGL…GWSI. A disordered region spans residues 379 to 399; the sequence is EASSSAQEAGTGTRLLDHKQV.

The protein belongs to the mitochondrial carrier (TC 2.A.29) family. SLC25A38 subfamily.

It localises to the mitochondrion inner membrane. The catalysed reaction is glycine(in) = glycine(out). Functionally, mitochondrial glycine transporter that imports glycine into the mitochondrial matrix. Plays an important role in providing glycine for the first enzymatic step in heme biosynthesis, the condensation of glycine with succinyl-CoA to produce 5-aminolevulinate (ALA) in the mitochondrial matrix. The polypeptide is Mitochondrial glycine transporter (Mycosarcoma maydis (Corn smut fungus)).